The following is a 193-amino-acid chain: Rho-related protein racF1 (193 aa).

10-17 (GDGAVGKT) serves as a coordination point for GTP. Positions 32-40 (YIPTVFDNY) match the Effector region motif. Residues 57-61 (DTAGQ) and 115-118 (TKQD) each bind GTP. Position 190 is a cysteine methyl ester (cysteine 190). Cysteine 190 carries the S-geranylgeranyl cysteine lipid modification. A propeptide spans 191-193 (TIM) (removed in mature form).

Belongs to the small GTPase superfamily. Rho family. As to quaternary structure, interacts with pakB.

It is found in the membrane. Its function is as follows. Might act in concert and/or share functions with other members of the RHO family in the regulation of a subset of cytoskeletal rearrangements that are required for these processes. This Dictyostelium discoideum (Social amoeba) protein is Rho-related protein racF1 (racF1).